Consider the following 159-residue polypeptide: Cell number regulator 4 (159 aa).

The helical transmembrane segment at 52-74 (LAGLLYCLLLHAGVAVVPCHCIY) threads the bilayer.

Belongs to the cornifelin family. As to expression, expressed in roots, coleoptiles, leaves, stalks, apical meristems, immature ears, endosperm, pericarp and tassel spikelets.

It is found in the membrane. In Zea mays (Maize), this protein is Cell number regulator 4 (CNR4).